Reading from the N-terminus, the 225-residue chain is Ribosome maturation factor RimM (225 aa).

The PRC barrel domain occupies 144-225 (ADEFYWVDLI…RIVVDWEADY (82 aa)).

This sequence belongs to the RimM family. Binds ribosomal protein uS19.

It localises to the cytoplasm. In terms of biological role, an accessory protein needed during the final step in the assembly of 30S ribosomal subunit, possibly for assembly of the head region. Essential for efficient processing of 16S rRNA. May be needed both before and after RbfA during the maturation of 16S rRNA. It has affinity for free ribosomal 30S subunits but not for 70S ribosomes. This is Ribosome maturation factor RimM from Burkholderia orbicola (strain MC0-3).